We begin with the raw amino-acid sequence, 364 residues long: DNA replication and repair protein RecF (364 aa).

Position 30–37 (30–37 (GENGSGKT)) interacts with ATP.

The protein belongs to the RecF family.

It is found in the cytoplasm. Its function is as follows. The RecF protein is involved in DNA metabolism; it is required for DNA replication and normal SOS inducibility. RecF binds preferentially to single-stranded, linear DNA. It also seems to bind ATP. This chain is DNA replication and repair protein RecF, found in Xylella fastidiosa (strain M23).